Reading from the N-terminus, the 368-residue chain is Phosphate acyltransferase (368 aa).

A disordered region spans residues Ala334–Thr368.

It belongs to the PlsX family. Homodimer. Probably interacts with PlsY.

The protein resides in the cytoplasm. It catalyses the reaction a fatty acyl-[ACP] + phosphate = an acyl phosphate + holo-[ACP]. It participates in lipid metabolism; phospholipid metabolism. In terms of biological role, catalyzes the reversible formation of acyl-phosphate (acyl-PO(4)) from acyl-[acyl-carrier-protein] (acyl-ACP). This enzyme utilizes acyl-ACP as fatty acyl donor, but not acyl-CoA. In Burkholderia thailandensis (strain ATCC 700388 / DSM 13276 / CCUG 48851 / CIP 106301 / E264), this protein is Phosphate acyltransferase.